Reading from the N-terminus, the 299-residue chain is MTSIIQSPPLNSKKPHLSQDDRINKNNNNNNKMIFQKRTIADNQIQSPLIGHYKLNNNNNNNNNNNNNNNNNNNNNNNNSSSNNNINNNNLVVDECCEKTEQIETKETITKVEDNLNLEVDVDKEIENEIAKYQHLLSTSTIFNGICQDYTDESDNSDEENVDDDDEEEDNKKQKEECEEEEEEECEEEEEEDSDEDSDDDDSDDSEDSDYVEESILNNCLRQQQQINHNGFMNKKYNYIDTNSYFFSRQQQQQPQKINHIYADTSLRMELIELLTVMKNNEREKGNMVEDVCVHEIFL.

The span at 1-10 (MTSIIQSPPL) shows a compositional bias: polar residues. 3 disordered regions span residues 1–30 (MTSI…NNNN), 54–89 (KLNN…INNN), and 148–212 (QDYT…SDYV). Positions 56-89 (NNNNNNNNNNNNNNNNNNNNNNNNSSSNNNINNN) are enriched in low complexity. 2 stretches are compositionally biased toward acidic residues: residues 150 to 169 (YTDE…DEEE) and 177 to 212 (ECEE…SDYV).

This is an uncharacterized protein from Dictyostelium discoideum (Social amoeba).